The primary structure comprises 124 residues: Large ribosomal subunit protein bL12 (124 aa).

It belongs to the bacterial ribosomal protein bL12 family. In terms of assembly, homodimer. Part of the ribosomal stalk of the 50S ribosomal subunit. Forms a multimeric L10(L12)X complex, where L10 forms an elongated spine to which 2 to 4 L12 dimers bind in a sequential fashion. Binds GTP-bound translation factors.

Forms part of the ribosomal stalk which helps the ribosome interact with GTP-bound translation factors. Is thus essential for accurate translation. In Jannaschia sp. (strain CCS1), this protein is Large ribosomal subunit protein bL12.